We begin with the raw amino-acid sequence, 194 residues long: ATP-dependent Clp protease proteolytic subunit (194 aa).

S98 (nucleophile) is an active-site residue. H123 is a catalytic residue.

This sequence belongs to the peptidase S14 family. Fourteen ClpP subunits assemble into 2 heptameric rings which stack back to back to give a disk-like structure with a central cavity, resembling the structure of eukaryotic proteasomes.

It is found in the cytoplasm. The catalysed reaction is Hydrolysis of proteins to small peptides in the presence of ATP and magnesium. alpha-casein is the usual test substrate. In the absence of ATP, only oligopeptides shorter than five residues are hydrolyzed (such as succinyl-Leu-Tyr-|-NHMec, and Leu-Tyr-Leu-|-Tyr-Trp, in which cleavage of the -Tyr-|-Leu- and -Tyr-|-Trp bonds also occurs).. Its function is as follows. Cleaves peptides in various proteins in a process that requires ATP hydrolysis. Has a chymotrypsin-like activity. Plays a major role in the degradation of misfolded proteins. The polypeptide is ATP-dependent Clp protease proteolytic subunit (Actinobacillus succinogenes (strain ATCC 55618 / DSM 22257 / CCUG 43843 / 130Z)).